A 394-amino-acid polypeptide reads, in one-letter code: Putative pectate lyase 17 (394 aa).

The first 22 residues, 1–22, serve as a signal peptide directing secretion; it reads MTHFTVSCLLVALFLCQSLVHA. The Ca(2+) site is built by aspartate 192, aspartate 216, and aspartate 220. Arginine 272 is an active-site residue.

It belongs to the polysaccharide lyase 1 family. Requires Ca(2+) as cofactor.

It carries out the reaction Eliminative cleavage of (1-&gt;4)-alpha-D-galacturonan to give oligosaccharides with 4-deoxy-alpha-D-galact-4-enuronosyl groups at their non-reducing ends.. It functions in the pathway glycan metabolism; pectin degradation; 2-dehydro-3-deoxy-D-gluconate from pectin: step 2/5. In Arabidopsis thaliana (Mouse-ear cress), this protein is Putative pectate lyase 17.